The chain runs to 503 residues: ATP synthase subunit alpha (503 aa).

169–176 (GDRKTGKT) serves as a coordination point for ATP.

The protein belongs to the ATPase alpha/beta chains family. As to quaternary structure, F-type ATPases have 2 components, CF(1) - the catalytic core - and CF(0) - the membrane proton channel. CF(1) has five subunits: alpha(3), beta(3), gamma(1), delta(1), epsilon(1). CF(0) has three main subunits: a(1), b(2) and c(9-12). The alpha and beta chains form an alternating ring which encloses part of the gamma chain. CF(1) is attached to CF(0) by a central stalk formed by the gamma and epsilon chains, while a peripheral stalk is formed by the delta and b chains.

It localises to the cell membrane. The catalysed reaction is ATP + H2O + 4 H(+)(in) = ADP + phosphate + 5 H(+)(out). Its function is as follows. Produces ATP from ADP in the presence of a proton gradient across the membrane. The alpha chain is a regulatory subunit. This chain is ATP synthase subunit alpha, found in Lactobacillus helveticus (strain DPC 4571).